Consider the following 289-residue polypeptide: Acetyl-coenzyme A carboxylase carboxyl transferase subunit beta (289 aa).

One can recognise a CoA carboxyltransferase N-terminal domain in the interval 34 to 289; sequence MWVKCNKCGE…KLINMHQNSF (256 aa). The Zn(2+) site is built by cysteine 38, cysteine 41, cysteine 57, and cysteine 60. Residues 38–60 form a C4-type zinc finger; sequence CNKCGEILYQNDLEKNYMVCNLC.

Belongs to the AccD/PCCB family. As to quaternary structure, acetyl-CoA carboxylase is a heterohexamer composed of biotin carboxyl carrier protein (AccB), biotin carboxylase (AccC) and two subunits each of ACCase subunit alpha (AccA) and ACCase subunit beta (AccD). Zn(2+) is required as a cofactor.

The protein localises to the cytoplasm. The enzyme catalyses N(6)-carboxybiotinyl-L-lysyl-[protein] + acetyl-CoA = N(6)-biotinyl-L-lysyl-[protein] + malonyl-CoA. Its pathway is lipid metabolism; malonyl-CoA biosynthesis; malonyl-CoA from acetyl-CoA: step 1/1. Its function is as follows. Component of the acetyl coenzyme A carboxylase (ACC) complex. Biotin carboxylase (BC) catalyzes the carboxylation of biotin on its carrier protein (BCCP) and then the CO(2) group is transferred by the transcarboxylase to acetyl-CoA to form malonyl-CoA. This is Acetyl-coenzyme A carboxylase carboxyl transferase subunit beta from Clostridium botulinum (strain Okra / Type B1).